The sequence spans 499 residues: Probable alkaline/neutral invertase F (499 aa).

Serine 11 carries the phosphoserine modification. Threonine 20 carries the phosphothreonine modification. Serine 497 bears the Phosphoserine mark.

This sequence belongs to the glycosyl hydrolase 100 family.

The catalysed reaction is Hydrolysis of terminal non-reducing beta-D-fructofuranoside residues in beta-D-fructofuranosides.. Invertase that cleaves sucrose into glucose and fructose. This Arabidopsis thaliana (Mouse-ear cress) protein is Probable alkaline/neutral invertase F.